Reading from the N-terminus, the 154-residue chain is Superoxide dismutase [Cu-Zn] (154 aa).

Residues His47, His49, and His64 each contribute to the Cu cation site. Residues Cys58 and Cys147 are joined by a disulfide bond. Residues His64, His72, His81, and Asp84 each contribute to the Zn(2+) site. Residue His121 participates in Cu cation binding. A substrate-binding site is contributed by Arg144.

Belongs to the Cu-Zn superoxide dismutase family. In terms of assembly, homodimer. Requires Cu cation as cofactor. It depends on Zn(2+) as a cofactor.

It is found in the cytoplasm. The catalysed reaction is 2 superoxide + 2 H(+) = H2O2 + O2. Functionally, destroys radicals which are normally produced within the cells and which are toxic to biological systems. The protein is Superoxide dismutase [Cu-Zn] (sod1) of Schizosaccharomyces pombe (strain 972 / ATCC 24843) (Fission yeast).